The following is a 322-amino-acid chain: Tyrosine recombinase XerC (322 aa).

Residues 14-104 (PDLREAAAAW…ALRSFARHLD (91 aa)) enclose the Core-binding (CB) domain. The region spanning 125-311 (RLPRPLPVAA…DSARLLSAFD (187 aa)) is the Tyr recombinase domain. Residues arginine 170, lysine 195, histidine 263, arginine 266, and histidine 289 contribute to the active site. The active-site O-(3'-phospho-DNA)-tyrosine intermediate is the tyrosine 298.

The protein belongs to the 'phage' integrase family. XerC subfamily. Forms a cyclic heterotetrameric complex composed of two molecules of XerC and two molecules of XerD.

The protein localises to the cytoplasm. Its function is as follows. Site-specific tyrosine recombinase, which acts by catalyzing the cutting and rejoining of the recombining DNA molecules. The XerC-XerD complex is essential to convert dimers of the bacterial chromosome into monomers to permit their segregation at cell division. It also contributes to the segregational stability of plasmids. The chain is Tyrosine recombinase XerC from Methylobacterium nodulans (strain LMG 21967 / CNCM I-2342 / ORS 2060).